The chain runs to 727 residues: Pre-B-cell leukemia transcription factor-interacting protein 1 (727 aa).

A compositionally biased stretch (polar residues) spans Met-1 to Ser-10. Residues Met-1–Val-169 are disordered. A phosphoserine mark is found at Ser-131, Ser-142, Ser-143, and Ser-144. Residue Thr-148 is modified to Phosphothreonine. Ser-164 carries the phosphoserine modification. Coiled-coil stretches lie at residues Phe-270–Asp-350 and Asp-377–Leu-405. The segment covering Gln-446–Asp-456 has biased composition (polar residues). Disordered stretches follow at residues Gln-446–Asp-565 and Leu-694–Gly-727. Residues Trp-473 to Ser-563 are compositionally biased toward basic and acidic residues. Residues Gln-486–Trp-506 carry the Nuclear localization signal motif. Ser-563 is subject to Phosphoserine. The Nuclear localization signal signature appears at Asp-691 to Glu-716. Positions Leu-694–Lys-703 are enriched in basic residues.

Interacts with ESR1, PBX1, PBX2 and PBX3. Interacts with TEX11.

Its subcellular location is the cytoplasm. The protein localises to the cytoskeleton. It localises to the nucleus. Functionally, regulator of pre-B-cell leukemia transcription factors (BPXs) function. Inhibits the binding of PBX1-HOX complex to DNA and blocks the transcriptional activity of E2A-PBX1. Tethers estrogen receptor-alpha (ESR1) to microtubules and allows them to influence estrogen receptors-alpha signaling. In Mus musculus (Mouse), this protein is Pre-B-cell leukemia transcription factor-interacting protein 1 (Pbxip1).